A 299-amino-acid chain; its full sequence is MSNDIDLIKRLGPSAMDQIMLYLAFSAMRTSGHRHGAFLDAAATAAKCAIYMTYLEQGQNLRMTGHLHHLEPKRVKIIVEEVRQALMEGKLLKTLGSQEPRYLIQFPYVWMEQYPWIPGRSRIPGTSLTSEEKRQIEHKLPSNLPDAQLVTSFEFLELIEFLHKRSQEDLPPEHRMELSEALAEHIKRRLLYSGTVTRIDSPWGMPFYALTRPFYAPADDQERTYIMVEDTARYFRMMKDWAEKRPNAMRALEELDVPPERWDEAMQELDEIIRTWADKYHQVGGIPMILQMVFGRKED.

The tract at residues 1–98 (MSNDIDLIKR…GKLLKTLGSQ (98 aa)) is DNA-binding domain. DNA-binding positions include 34-40 (RHGAFLD) and 60-76 (NLRMTGHLHHLEPKRVK). The flap domain stretch occupies residues 99–216 (EPRYLIQFPY…FYALTRPFYA (118 aa)). The active site involves S152. 179 to 181 (SEA) provides a ligand contact to DNA. The interval 217–299 (PADDQERTYI…LQMVFGRKED (83 aa)) is hood domain.

This sequence belongs to the peptidase S48 family. Upon expression in E.coli most protein is monomeric, although varying amounts of homodimer can be seen. Homodimer; disulfide-linked. Homodimer. Binds the 6 residue C-terminal peptide of PatS; one peptide binds to each subunit. In bacterial two-hybrid assays interacts robustly with itself, Alr2902 and Alr3234 and more weakly with Als1930. Probably autodegrades.

Protease activity is inhibited by PMSF, suggesting this is a serine protease. In terms of biological role, controls heterocyst differentiation. Dimerization is required for DNA-binding. Has both a protease and a DNA-binding activity. Controls heterocyst differentiation; increased expression leads to more heterocysts than usual. Has protease activity. Binds the promoter regions of hetR, hepA and patS and is required for their expression. Dimerization is required for DNA-binding, DNA-binding is inhibited by the PatS6 peptide. Binds the inverted repeat 5'-GTAGGCGAGGGGTCTAACCCCTCATTACC-3' found in the hetP promoter, required for expression of hetP. The chain is DNA-binding transcriptional activator HetR from Nostoc sp. (strain PCC 7120 / SAG 25.82 / UTEX 2576).